The primary structure comprises 576 residues: 3-hydroxy-3-methylglutaryl coenzyme A reductase 1 (576 aa).

The tract at residues 1–35 is disordered; sequence MDSRRRPSKPLLTSSGEVLHRKQASPVTDEDQIHR. 2 consecutive transmembrane segments (helical) span residues 42 to 62 and 89 to 109; these read ALPL…FSVA and AIVS…IDFV. Glu255 functions as the Charge relay system in the catalytic mechanism. Asn319 carries N-linked (GlcNAc...) asparagine glycosylation. Active-site charge relay system residues include Lys387 and Asp463. Residues 532–552 form a helical membrane-spanning segment; that stretch reads LLATIVAGSVLAGELSLMSAI. His561 serves as the catalytic Proton donor. Asn565 is a glycosylation site (N-linked (GlcNAc...) asparagine).

Belongs to the HMG-CoA reductase family. As to expression, expressed in trichomes, leaves, flowers, roots and stems.

It is found in the endoplasmic reticulum membrane. It localises to the plastid. The protein resides in the chloroplast membrane. The protein localises to the peroxisome membrane. The catalysed reaction is (R)-mevalonate + 2 NADP(+) + CoA = (3S)-3-hydroxy-3-methylglutaryl-CoA + 2 NADPH + 2 H(+). It participates in metabolic intermediate biosynthesis; (R)-mevalonate biosynthesis; (R)-mevalonate from acetyl-CoA: step 3/3. Catalyzes the synthesis of mevalonate, the specific precursor of all isoprenoid compounds present in plants. Component of the triterpene saponins (e.g. ginsenosides or panaxosides) and phytosterols biosynthetic pathways. Promotes triterpenes accumulation in roots. This Cannabis sativa (Hemp) protein is 3-hydroxy-3-methylglutaryl coenzyme A reductase 1.